A 57-amino-acid chain; its full sequence is Large ribosomal subunit protein bL32 (57 aa).

The protein belongs to the bacterial ribosomal protein bL32 family.

This chain is Large ribosomal subunit protein bL32, found in Bacillus pumilus (strain SAFR-032).